The sequence spans 448 residues: Probable glycine dehydrogenase (decarboxylating) subunit 1 (448 aa).

The protein belongs to the GcvP family. N-terminal subunit subfamily. The glycine cleavage system is composed of four proteins: P, T, L and H. In this organism, the P 'protein' is a heterodimer of two subunits.

It carries out the reaction N(6)-[(R)-lipoyl]-L-lysyl-[glycine-cleavage complex H protein] + glycine + H(+) = N(6)-[(R)-S(8)-aminomethyldihydrolipoyl]-L-lysyl-[glycine-cleavage complex H protein] + CO2. Its function is as follows. The glycine cleavage system catalyzes the degradation of glycine. The P protein binds the alpha-amino group of glycine through its pyridoxal phosphate cofactor; CO(2) is released and the remaining methylamine moiety is then transferred to the lipoamide cofactor of the H protein. This chain is Probable glycine dehydrogenase (decarboxylating) subunit 1, found in Staphylococcus aureus (strain COL).